We begin with the raw amino-acid sequence, 295 residues long: Bifunctional protein FolD (295 aa).

NADP(+) contacts are provided by residues 166-168, Ser195, and Ile236; that span reads GRS.

It belongs to the tetrahydrofolate dehydrogenase/cyclohydrolase family. Homodimer.

The enzyme catalyses (6R)-5,10-methylene-5,6,7,8-tetrahydrofolate + NADP(+) = (6R)-5,10-methenyltetrahydrofolate + NADPH. The catalysed reaction is (6R)-5,10-methenyltetrahydrofolate + H2O = (6R)-10-formyltetrahydrofolate + H(+). The protein operates within one-carbon metabolism; tetrahydrofolate interconversion. In terms of biological role, catalyzes the oxidation of 5,10-methylenetetrahydrofolate to 5,10-methenyltetrahydrofolate and then the hydrolysis of 5,10-methenyltetrahydrofolate to 10-formyltetrahydrofolate. The sequence is that of Bifunctional protein FolD from Chlorobium phaeobacteroides (strain DSM 266 / SMG 266 / 2430).